A 126-amino-acid polypeptide reads, in one-letter code: Protein ApaG (126 aa).

Residues 2-126 (SDPRYQIDVS…FRLAVPGALH (125 aa)) enclose the ApaG domain.

The polypeptide is Protein ApaG (Pseudomonas putida (strain ATCC 700007 / DSM 6899 / JCM 31910 / BCRC 17059 / LMG 24140 / F1)).